The following is a 644-amino-acid chain: 1-deoxy-D-xylulose-5-phosphate synthase (644 aa).

Residues His-84 and 125-127 (GHS) each bind thiamine diphosphate. A Mg(2+)-binding site is contributed by Asp-156. Residues 157 to 158 (GA), Asn-185, Tyr-296, and Glu-378 contribute to the thiamine diphosphate site. Asn-185 contacts Mg(2+).

Belongs to the transketolase family. DXPS subfamily. As to quaternary structure, homodimer. The cofactor is Mg(2+). Thiamine diphosphate serves as cofactor.

It catalyses the reaction D-glyceraldehyde 3-phosphate + pyruvate + H(+) = 1-deoxy-D-xylulose 5-phosphate + CO2. It functions in the pathway metabolic intermediate biosynthesis; 1-deoxy-D-xylulose 5-phosphate biosynthesis; 1-deoxy-D-xylulose 5-phosphate from D-glyceraldehyde 3-phosphate and pyruvate: step 1/1. In terms of biological role, catalyzes the acyloin condensation reaction between C atoms 2 and 3 of pyruvate and glyceraldehyde 3-phosphate to yield 1-deoxy-D-xylulose-5-phosphate (DXP). The sequence is that of 1-deoxy-D-xylulose-5-phosphate synthase from Paramagnetospirillum magneticum (strain ATCC 700264 / AMB-1) (Magnetospirillum magneticum).